We begin with the raw amino-acid sequence, 132 residues long: Small heat shock protein hspL (132 aa).

The sHSP domain maps to threonine 15–glutamate 131.

Belongs to the small heat shock protein (HSP20) family.

The polypeptide is Small heat shock protein hspL (hspL) (Dictyostelium discoideum (Social amoeba)).